Consider the following 217-residue polypeptide: Homologous-pairing protein 2 homolog (217 aa).

Residues 93–153 (IVALTAKVQS…LKNIKAATNH (61 aa)) adopt a coiled-coil conformation. Positions 118-182 (SSALTTPEMQ…WRKRKRMATE (65 aa)) are DNA-binding.

It belongs to the HOP2 family. In terms of assembly, interacts with the DNA-binding domain of the nuclear receptors NR3C1/GR, ESR2/ER-beta, THRB and RXRA. Forms a stable heterodimer with MND1. Interacts with PSMC3/TBP1. In terms of processing, PTM: Phosphorylated by PKA, PKC and MAPK. Highly expressed in testis and colon.

The protein resides in the nucleus. Plays an important role in meiotic recombination. Stimulates DMC1-mediated strand exchange required for pairing homologous chromosomes during meiosis. The complex PSMC3IP/MND1 binds DNA, stimulates the recombinase activity of DMC1 as well as DMC1 D-loop formation from double-strand DNA. This complex stabilizes presynaptic RAD51 and DMC1 filaments formed on single strand DNA to capture double-strand DNA. This complex stimulates both synaptic and presynaptic critical steps in RAD51 and DMC1-promoted homologous pairing. May inhibit HIV-1 viral protein TAT activity and modulate the activity of proteasomes through association with PSMC3. Acts as a tissue specific coactivator of hormone-dependent transcription mediated by nuclear receptors. The sequence is that of Homologous-pairing protein 2 homolog (PSMC3IP) from Homo sapiens (Human).